The chain runs to 462 residues: tRNA-2-methylthio-N(6)-dimethylallyladenosine synthase (462 aa).

Residues 1-116 (MKLFIQTLGC…ITQVLERPKA (116 aa)) form the MTTase N-terminal domain. C10, C47, C79, C148, C152, and C155 together coordinate [4Fe-4S] cluster. In terms of domain architecture, Radical SAM core spans 134–370 (QGMGIKAHLN…NLHKEILSKK (237 aa)). In terms of domain architecture, TRAM spans 372–436 (QLEIGRIHNV…GGGLMGRFIN (65 aa)).

This sequence belongs to the methylthiotransferase family. MiaB subfamily. Monomer. Requires [4Fe-4S] cluster as cofactor.

It is found in the cytoplasm. The catalysed reaction is N(6)-dimethylallyladenosine(37) in tRNA + (sulfur carrier)-SH + AH2 + 2 S-adenosyl-L-methionine = 2-methylsulfanyl-N(6)-dimethylallyladenosine(37) in tRNA + (sulfur carrier)-H + 5'-deoxyadenosine + L-methionine + A + S-adenosyl-L-homocysteine + 2 H(+). Functionally, catalyzes the methylthiolation of N6-(dimethylallyl)adenosine (i(6)A), leading to the formation of 2-methylthio-N6-(dimethylallyl)adenosine (ms(2)i(6)A) at position 37 in tRNAs that read codons beginning with uridine. The chain is tRNA-2-methylthio-N(6)-dimethylallyladenosine synthase from Helicobacter hepaticus (strain ATCC 51449 / 3B1).